A 47-amino-acid chain; its full sequence is Large ribosomal subunit protein bL32c (47 aa).

It belongs to the bacterial ribosomal protein bL32 family.

It is found in the plastid. The protein is Large ribosomal subunit protein bL32c (rpl32) of Prototheca wickerhamii.